The primary structure comprises 444 residues: Tubulin beta chain (444 aa).

The short motif at 1–4 is the MREI motif element; it reads MREI. Glutamine 11, glutamate 69, serine 138, glycine 142, threonine 143, glycine 144, asparagine 204, and asparagine 226 together coordinate GTP. Residue glutamate 69 participates in Mg(2+) binding. Positions 421-444 are disordered; sequence EYQQYQDATAEEEEDFNEEAEEEA. The segment covering 429 to 444 has biased composition (acidic residues); the sequence is TAEEEEDFNEEAEEEA. Glutamate 438 carries the 5-glutamyl polyglutamate modification.

The protein belongs to the tubulin family. In terms of assembly, dimer of alpha and beta chains. A typical microtubule is a hollow water-filled tube with an outer diameter of 25 nm and an inner diameter of 15 nM. Alpha-beta heterodimers associate head-to-tail to form protofilaments running lengthwise along the microtubule wall with the beta-tubulin subunit facing the microtubule plus end conferring a structural polarity. Microtubules usually have 13 protofilaments but different protofilament numbers can be found in some organisms and specialized cells. Requires Mg(2+) as cofactor. Post-translationally, some glutamate residues at the C-terminus are polyglycylated, resulting in polyglycine chains on the gamma-carboxyl group. Glycylation is mainly limited to tubulin incorporated into axonemes (cilia and flagella) whereas glutamylation is prevalent in neuronal cells, centrioles, axonemes, and the mitotic spindle. Both modifications can coexist on the same protein on adjacent residues, and lowering polyglycylation levels increases polyglutamylation, and reciprocally. The precise function of polyglycylation is still unclear. Some glutamate residues at the C-terminus are polyglutamylated, resulting in polyglutamate chains on the gamma-carboxyl group. Polyglutamylation plays a key role in microtubule severing by spastin (SPAST). SPAST preferentially recognizes and acts on microtubules decorated with short polyglutamate tails: severing activity by SPAST increases as the number of glutamates per tubulin rises from one to eight, but decreases beyond this glutamylation threshold.

The protein resides in the cytoplasm. It localises to the cytoskeleton. Functionally, tubulin is the major constituent of microtubules, a cylinder consisting of laterally associated linear protofilaments composed of alpha- and beta-tubulin heterodimers. Microtubules grow by the addition of GTP-tubulin dimers to the microtubule end, where a stabilizing cap forms. Below the cap, tubulin dimers are in GDP-bound state, owing to GTPase activity of alpha-tubulin. This is Tubulin beta chain (tubb) from Xenopus laevis (African clawed frog).